The chain runs to 84 residues: Mu-conotoxin-like Cal 12.2b (84 aa).

The N-terminal stretch at 1 to 19 is a signal peptide; the sequence is MKLTCVLVVLLLVLPFGDL. The propeptide occupies 20–42; sequence ITTSNTEDNKRGATPWQNSLKAR. Disulfide bonds link Cys45–Cys57, Cys52–Cys65, Cys59–Cys70, and Cys64–Cys76. Residue Trp72 is modified to 6'-bromotryptophan. Pro77 bears the 4-hydroxyproline mark. The residue at position 81 (Trp81) is a 6'-bromotryptophan.

It belongs to the conotoxin O1 superfamily. Expressed by the venom duct.

It is found in the secreted. Functionally, mu-conotoxins block voltage-gated sodium channels. This toxin reversibly blocks voltage-gated sodium channel in cephalopods, with no alteration in the voltage dependence of sodium conductance or on the kinetics of inactivation. The protein is Mu-conotoxin-like Cal 12.2b of Californiconus californicus (California cone).